The primary structure comprises 289 residues: Tachykinins (289 aa).

Residues 1 to 24 (MRPLSGLIALALLLLLLLTAPSSA) form the signal peptide. Residues 24–94 (AADTETESSG…DEEADSSYAE (71 aa)) form a disordered region. A propeptide spanning residues 25 to 47 (ADTETESSGSPLTPGAEEPRRVV) is cleaved from the precursor. Residue Arg59 is modified to Arginine amide. Basic and acidic residues predominate over residues 60 to 69 (GKKDEEHDTS). Asn95 carries the post-translational modification Asparagine amide. Arg110 bears the Arginine amide mark. Residue Val153 is modified to Valine amide. Arg165, Arg200, Arg239, and Arg281 each carry arginine amide. Residues 285–289 (PALFE) constitute a propeptide that is removed on maturation.

The protein belongs to the tachykinin family. In terms of tissue distribution, strong expression is seen in a group of 14 cells plus one isolated cell in the midgut of stage 17 embryos. Also expressed in a pair of medially located unidentified cells, just posterior to the brain, and in two lateral groups of cells that may be associated with tracheae. Expression in the larval gut is restricted to cells with endocrine cell-like morphology in the posterior midgut, just anterior to the malphigian tubules. In the brain, expression is detected in a restricted number of neuronal cell bodies. Expression in the adult female gut is restricted to the midgut with no expression detected in the hindgut.

It localises to the secreted. In terms of biological role, tachykinins are active peptides which excite neurons, evoke behavioral responses, are potent vasodilators and secretagogues, and contract (directly or indirectly) many smooth muscles. Stimulates gut muscle contractions. Required for the response to the male sex pheromone CH503 which is transferred from males to females during mating and inhibits courtship behavior by other males. The Gr68a gustatory receptor is required for detection of the pheromone and Gr68a-expressing neurons in the male foreleg relay signals to the suboesophageal zone (SEZ) which leads to courtship suppression through release of tachykinin from a cluster of 8-10 neurons in the SEZ. This chain is Tachykinins, found in Drosophila melanogaster (Fruit fly).